The following is a 56-amino-acid chain: Large ribosomal subunit protein bL32B (56 aa).

Residues 1-19 (MAVPKRRMSRSNTRHRRAQ) show a composition bias toward basic residues. The tract at residues 1–22 (MAVPKRRMSRSNTRHRRAQWKA) is disordered.

The protein belongs to the bacterial ribosomal protein bL32 family.

This is Large ribosomal subunit protein bL32B (rpmF2) from Streptomyces coelicolor (strain ATCC BAA-471 / A3(2) / M145).